The following is a 469-amino-acid chain: Gustatory receptor for sugar taste 64f (469 aa).

The Cytoplasmic portion of the chain corresponds to 1-117 (MKILPKLERK…SFSWRNIRTC (117 aa)). The helical transmembrane segment at 118–138 (FSLLFIASSLANFGLSLFKVL) threads the bilayer. Residues 139–146 (NNPISFNS) are Extracellular-facing. Residues 147–167 (IKPIIFRGSVLLVLIVALNLA) traverse the membrane as a helical segment. At 168-199 (RQWPQLMMYWHTVEKDLPQYKTQLTKWKMGHT) the chain is on the cytoplasmic side. Residues 200–220 (ISMVMLLGMMLSFAEHILSMV) form a helical membrane-spanning segment. The Extracellular portion of the chain corresponds to 221-265 (SAINYASFCNRTADPIQNYFLRTNDEIFFVTSYSTTLALWGKFQN). N-linked (GlcNAc...) asparagine glycosylation is present at Asn-230. The chain crosses the membrane as a helical span at residues 266-286 (VFSTFIWNYMDLFVMIVSIGL). At 287–330 (ASKFRQLNDDLRNFKGMNMAPSYWSERRIQYRNICILCDKMDDA) the chain is on the cytoplasmic side. Residues 331–351 (ISLITMVSFSNNLYFICVQLL) form a helical membrane-spanning segment. The Extracellular portion of the chain corresponds to 352-353 (RS). A helical transmembrane segment spans residues 354-374 (LNTMPSVAHAVYFYFSLIFLI). Over 375 to 435 (GRTLAVSLYS…GMKFFHLTRK (61 aa)) the chain is Cytoplasmic. A helical membrane pass occupies residues 436-456 (LVLSVAGTIVTYELVLIQFHE). The Extracellular portion of the chain corresponds to 457-469 (DNDLWDCDQSYYS).

Belongs to the insect chemoreceptor superfamily. Gustatory receptor (GR) family. Gr5a subfamily. In terms of tissue distribution, expressed in Gr5a-expressing sugar-sensing cells.

The protein localises to the cell membrane. Its function is as follows. One of the few identified sugar gustatory receptors identified so far and which promotes the starvation-induced increase of feeding motivation. Required in combination with Gr64a to detect sucrose, maltose, and glucose. In Drosophila melanogaster (Fruit fly), this protein is Gustatory receptor for sugar taste 64f (Gr64f).